Here is a 306-residue protein sequence, read N- to C-terminus: Protein-methionine-sulfoxide reductase catalytic subunit MsrP (306 aa).

The tat-type signal signal peptide spans 1-45 (MLIRHAPDLTDNDVTDHSLYLKRRTLMAGVAGLGVAGASASHAQA). Mo-molybdopterin contacts are provided by residues Asn69, 72–73 (YE), Cys127, Thr162, Asn210, Arg215, and 226–228 (GIK).

It belongs to the MsrP family. As to quaternary structure, heterodimer of a catalytic subunit (MsrP) and a heme-binding subunit (MsrQ). It depends on Mo-molybdopterin as a cofactor. In terms of processing, predicted to be exported by the Tat system. The position of the signal peptide cleavage has not been experimentally proven.

It localises to the periplasm. It carries out the reaction L-methionyl-[protein] + a quinone + H2O = L-methionyl-(S)-S-oxide-[protein] + a quinol. It catalyses the reaction L-methionyl-[protein] + a quinone + H2O = L-methionyl-(R)-S-oxide-[protein] + a quinol. Its function is as follows. Part of the MsrPQ system that repairs oxidized periplasmic proteins containing methionine sulfoxide residues (Met-O), using respiratory chain electrons. Thus protects these proteins from oxidative-stress damage caused by reactive species of oxygen and chlorine generated by the host defense mechanisms. MsrPQ is essential for the maintenance of envelope integrity under bleach stress, rescuing a wide series of structurally unrelated periplasmic proteins from methionine oxidation. The catalytic subunit MsrP is non-stereospecific, being able to reduce both (R-) and (S-) diastereoisomers of methionine sulfoxide. This Caulobacter vibrioides (strain ATCC 19089 / CIP 103742 / CB 15) (Caulobacter crescentus) protein is Protein-methionine-sulfoxide reductase catalytic subunit MsrP.